The following is a 461-amino-acid chain: RCC1-like G exchanging factor-like protein (461 aa).

Over residues 1 to 10 the composition is skewed to low complexity; that stretch reads MLAAARALRG. A mitochondrion-targeting transit peptide spans 1–34; that stretch reads MLAAARALRGPRPRWPTPAREHWTPAGRSRSRRE. The segment at 1–35 is disordered; sequence MLAAARALRGPRPRWPTPAREHWTPAGRSRSRREA. RCC1 repeat units lie at residues 55–121, 125–188, 190–244, 245–297, 298–350, 352–408, and 409–458; these read ADRV…LSSK, VTKV…VLTD, EGVF…FLTD, KGEV…ALSA, DGGV…VLNA, GHVF…ALTN, and KGEL…TLAK.

In terms of assembly, forms a regulatory protein-RNA complex, consisting of RCC1L, NGRN, RPUSD3, RPUSD4, TRUB2, FASTKD2 and 16S mt-rRNA. Interacts with 16S mt-rRNA; this interaction is direct. Interacts with OPA1; this interaction is direct. In terms of tissue distribution, at E8.5, broadly expressed in yolk sac placenta, decidua, and embryo, with highest levels found in the trophoblast giant cells (TGCs) and ectoplacental cone (at protein level).

It is found in the mitochondrion inner membrane. Its function is as follows. Guanine nucleotide exchange factor (GEF) for mitochondrial dynamin-related GTPase OPA1. Activates OPA1, by exchanging bound GDP for free GTP, and drives OPA1 and MFN1-dependent mitochondrial fusion. Plays an essential role in mitochondrial ribosome biogenesis. As a component of a functional protein-RNA module, consisting of RCC1L, NGRN, RPUSD3, RPUSD4, TRUB2, FASTKD2 and 16S mitochondrial ribosomal RNA (16S mt-rRNA), controls 16S mt-rRNA abundance and is required for intra-mitochondrial translation of core subunits of the oxidative phosphorylation system. This chain is RCC1-like G exchanging factor-like protein, found in Mus musculus (Mouse).